The chain runs to 331 residues: Protein REVEILLE 6 (331 aa).

Positions 67–121 (TITKSRESWTEPEHDKFLEALQLFDRDWKKIEAFIGSKTVIQIRSHAQKYFLKVQ) constitute an HTH myb-type domain. The H-T-H motif DNA-binding region spans 94–117 (WKKIEAFIGSKTVIQIRSHAQKYF). Disordered regions lie at residues 122-166 (KSGT…EPND), 203-237 (LPKA…GNVG), and 309-331 (SETA…EIST). Residues 150–165 (VQLQVPGSFKSTSEPN) are compositionally biased toward polar residues. Positions 211 to 220 (NNNCSSSSEN) are enriched in low complexity. Basic and acidic residues-rich tracts occupy residues 226–235 (SNRDARDHGN) and 322–331 (LNKDPPEIST).

It is found in the nucleus. In terms of biological role, probable transcription factor. RVE4, RVE6 and RVE8 are components of the circadian system acting synergistically to regulate flowering time, redundantly to regulate leaf growth, and antagonistically to regulate hypocotyl elongation; their action seems independent of ZTL and HY5. The polypeptide is Protein REVEILLE 6 (Arabidopsis thaliana (Mouse-ear cress)).